The chain runs to 106 residues: Trp operon repressor homolog (106 aa).

The DNA-binding element occupies Q59 to I82.

This sequence belongs to the TrpR family. As to quaternary structure, homodimer.

The protein localises to the cytoplasm. Its function is as follows. This protein is an aporepressor. When complexed with L-tryptophan it binds the operator region of the trp operon and prevents the initiation of transcription. The protein is Trp operon repressor homolog of Histophilus somni (strain 2336) (Haemophilus somnus).